The following is a 160-amino-acid chain: Endoribonuclease YbeY (160 aa).

Zn(2+)-binding residues include H123, H127, and H133.

This sequence belongs to the endoribonuclease YbeY family. Zn(2+) is required as a cofactor.

The protein localises to the cytoplasm. Functionally, single strand-specific metallo-endoribonuclease involved in late-stage 70S ribosome quality control and in maturation of the 3' terminus of the 16S rRNA. The chain is Endoribonuclease YbeY from Roseiflexus sp. (strain RS-1).